A 730-amino-acid chain; its full sequence is ATP-dependent DNA helicase Hel308 (730 aa).

Residues Q28 and 46-53 (IPTASGKT) each bind ATP. In terms of domain architecture, Helicase ATP-binding spans 33 to 199 (EKGLLEGKNL…WLDAELVLSE (167 aa)). A DEAH box motif is present at residues 144 to 147 (DEVH). One can recognise a Helicase C-terminal domain in the interval 232–433 (AVNLVLDTIK…ALRTHILSTI (202 aa)).

Belongs to the helicase family. Hel308 subfamily. As to quaternary structure, monomer.

It carries out the reaction Couples ATP hydrolysis with the unwinding of duplex DNA by translocating in the 3'-5' direction.. The catalysed reaction is ATP + H2O = ADP + phosphate + H(+). Its function is as follows. DNA-dependent ATPase and 3'-5' DNA helicase that may be involved in repair of stalled replication forks. This chain is ATP-dependent DNA helicase Hel308, found in Methanosarcina mazei (strain ATCC BAA-159 / DSM 3647 / Goe1 / Go1 / JCM 11833 / OCM 88) (Methanosarcina frisia).